A 965-amino-acid polypeptide reads, in one-letter code: MEGKVFLGHNLIWVMLLMGQLHGYKSCIDEEKIALFELRKHMISRTESESVLPTWTNDTTSDCCRWKGVACNRVSGRVTEISFGGLSLKDNSLLNLSLLHPFEDVRSLNLSSSRCSGLFDDVEGYKSLRKLRKLEILDLASNKFNNSIFHFLSAATSLTTLFLRSNNMDGSFPAKELRDLTNLELLDLSRNRFNGSIPIQELSSLRKLKALDLSGNEFSGSMELQGKFCTDLLFSIQSGICELNNMQELDLSQNKLVGHLPSCLTSLTGLRVLDLSSNKLTGTVPSSLGSLQSLEYLSLFDNDFEGSFSFGSLANLSNLMVLKLCSKSSSLQVLSESSWKPKFQLSVIALRSCNMEKVPHFLLHQKDLRHVDLSDNNISGKLPSWLLANNTKLKVLLLQNNLFTSFQIPKSAHNLLFLDVSANDFNHLFPENIGWIFPHLRYLNTSKNNFQENLPSSLGNMNGIQYMDLSRNSFHGNLPRSFVNGCYSMAILKLSHNKLSGEIFPESTNFTNILGLFMDNNLFTGKIGQGLRSLINLELLDMSNNNLTGVIPSWIGELPSLTALLISDNFLKGDIPMSLFNKSSLQLLDLSANSLSGVIPPQHDSRNGVVLLLQDNKLSGTIPDTLLANVEILDLRNNRFSGKIPEFINIQNISILLLRGNNFTGQIPHQLCGLSNIQLLDLSNNRLNGTIPSCLSNTSFGFGKECTSYDYDFGISFPSDVFNGFSLHQDFSSNKNGGIYFKSLLTLDPLSMDYKAATQTKIEFATKHRYDAYMGGNLKLLFGMDLSENELSGEIPVEFGGLLELRALNLSHNNLSGVIPKSISSMEKMESFDLSFNRLQGRIPSQLTELTSLSVFKVSHNNLSGVIPQGRQFNTFDAESYFGNRLLCGQPTNRSCNNNSYEEADNGVEADESIIDMVSFYLSFAAAYVTILIGILASLSFDSPWSRFWFYKVDAFIKKVRNLLL.

A signal peptide spans 1 to 23 (MEGKVFLGHNLIWVMLLMGQLHG). Topologically, residues 24–916 (YKSCIDEEKI…GVEADESIID (893 aa)) are extracellular. Asparagine 57, asparagine 95, asparagine 109, and asparagine 145 each carry an N-linked (GlcNAc...) asparagine glycan. LRR repeat units lie at residues 80–102 (EISFGGLSLKDNSLLNLSLLHPF), 103–127 (EDVRSLNLSSSRCSGLFDDVEGYKS), 131–154 (LRKLEILDLASNKFNNSIFHFLSA), 156–179 (TSLTTLFLRSNNMDGSFPAKELRD), 180–204 (LTNLELLDLSRNRFNGSIPIQELSS), 206–230 (RKLKALDLSGNEFSGSMELQGKFCT), 243–267 (LNNMQELDLSQNKLVGHLPSCLTSL), 268–290 (TGLRVLDLSSNKLTGTVPSSLGS), 292–315 (QSLEYLSLFDNDFEGSFSFGSLAN), 316–341 (LSNLMVLKLCSKSSSLQVLSESSWKP), 342–365 (KFQLSVIALRSCNMEKVPHFLLHQ), 366–389 (KDLRHVDLSDNNISGKLPSWLLAN), 391–415 (TKLKVLLLQNNLFTSFQIPKSAHNL), 417–435 (FLDVSANDFNHLFPENIGW), 437–461 (FPHLRYLNTSKNNFQENLPSSLGNM), 462–485 (NGIQYMDLSRNSFHGNLPRSFVNG), and 487–512 (YSMAILKLSHNKLSGEIFPESTNFTN). Asparagine 194 carries an N-linked (GlcNAc...) asparagine glycan. An N-linked (GlcNAc...) asparagine glycan is attached at asparagine 315. N-linked (GlcNAc...) asparagine glycosylation is found at asparagine 377 and asparagine 389. The N-linked (GlcNAc...) asparagine glycan is linked to asparagine 444. Residue asparagine 509 is glycosylated (N-linked (GlcNAc...) asparagine). An LRR 18; degenerate repeat occupies 514–533 (LGLFMDNNLFTGKIGQGLRS). LRR repeat units lie at residues 534-557 (LINLELLDMSNNNLTGVIPSWIGE), 558-582 (LPSLTALLISDNFLKGDIPMSLFNK), 584-606 (SLQLLDLSANSLSGVIPPQHDSR), 608-627 (GVVLLLQDNKLSGTIPDTLL), 628-652 (ANVEILDLRNNRFSGKIPEFINIQN), 654-674 (SILLLRGNNFTGQIPHQLCGL), 675-698 (SNIQLLDLSNNRLNGTIPSCLSNT), 778-801 (LKLLFGMDLSENELSGEIPVEFGG), 802-825 (LLELRALNLSHNNLSGVIPKSISS), 827-850 (EKMESFDLSFNRLQGRIPSQLTEL), and 851-875 (TSLSVFKVSHNNLSGVIPQGRQFNT). Residues asparagine 546 and asparagine 581 are each glycosylated (N-linked (GlcNAc...) asparagine). Asparagine 652, asparagine 662, asparagine 688, and asparagine 697 each carry an N-linked (GlcNAc...) asparagine glycan. Residues asparagine 809 and asparagine 814 are each glycosylated (N-linked (GlcNAc...) asparagine). N-linked (GlcNAc...) asparagine glycosylation is found at asparagine 862, asparagine 893, and asparagine 898. The chain crosses the membrane as a helical span at residues 917–937 (MVSFYLSFAAAYVTILIGILA). The Cytoplasmic segment spans residues 938–965 (SLSFDSPWSRFWFYKVDAFIKKVRNLLL).

It belongs to the RLP family.

The protein localises to the cell membrane. The sequence is that of Receptor-like protein 15 from Arabidopsis thaliana (Mouse-ear cress).